Consider the following 457-residue polypeptide: Putative hexose transporter 12 (457 aa).

Topologically, residues 1–2 are cytoplasmic; that stretch reads MG. The chain crosses the membrane as a helical span at residues 3-23; that stretch reads LIVSIFNIGCAIGGIVLSKVG. The Extracellular segment spans residues 24-29; the sequence is DIYGRR. A helical transmembrane segment spans residues 30–50; the sequence is IGLITVTAIYVVGILIQITSI. Over 51–60 the chain is Cytoplasmic; that stretch reads NKWYQYFIGR. A helical transmembrane segment spans residues 61–81; sequence IISGIGVGGIAVLSPMLISEV. Residues 82–87 lie on the Extracellular side of the membrane; sequence APKHIR. Residues 88 to 108 form a helical membrane-spanning segment; it reads GTLVQLYQLMGTMGIFLGYCT. Over 109–122 the chain is Cytoplasmic; that stretch reads NYGTKNYHNATQWR. Residues 123–143 form a helical membrane-spanning segment; sequence VGLGLCFAWATFMVSGMMFVP. At 144–247 the chain is on the extracellular side; that stretch reads ESPRYLIEVG…KSVGLKDSFQ (104 aa). N194 is a glycosylation site (N-linked (GlcNAc...) asparagine). Residues 248 to 268 traverse the membrane as a helical segment; that stretch reads TSIIIGVVNFFSSFIAVYTIE. The Cytoplasmic portion of the chain corresponds to 269–274; sequence RFGRRT. A helical transmembrane segment spans residues 275–295; that stretch reads CLLWGAASMLCCFAVFASVGV. Residues 296–319 lie on the Extracellular side of the membrane; sequence TKLWPQGSSHQDITSQGAGNCMIV. A helical transmembrane segment spans residues 320-340; the sequence is FTMFFIFSFATTWAGGCFVIV. Residues 341-353 are Cytoplasmic-facing; it reads SETFPLRAKSRGM. A helical transmembrane segment spans residues 354-374; the sequence is AIATAANWMWGFLISFFTPFI. The Extracellular segment spans residues 375–379; that stretch reads TGAIN. The helical transmembrane segment at 380 to 400 threads the bilayer; sequence FYYGYVFLGCLVFAYFYVFFF. Over 401-457 the chain is Cytoplasmic; it reads VPETKGLTLEEVNTMWLEGVPAWKSASWVPPERRTADYDADAIDHDNRPIYKRFFSS.

Belongs to the major facilitator superfamily. Sugar transporter (TC 2.A.1.1) family.

It localises to the membrane. Its function is as follows. Probable glucose transporter. In Saccharomyces cerevisiae (strain ATCC 204508 / S288c) (Baker's yeast), this protein is Putative hexose transporter 12 (HXT12).